The sequence spans 630 residues: Chaperone protein DnaK (630 aa).

Thr-197 carries the phosphothreonine; by autocatalysis modification. The segment covering Lys-604 to Asn-618 has biased composition (polar residues). The disordered stretch occupies residues Lys-604 to Lys-630. Positions Glu-619–Lys-630 are enriched in basic and acidic residues.

It belongs to the heat shock protein 70 family.

In terms of biological role, acts as a chaperone. This chain is Chaperone protein DnaK, found in Karelsulcia muelleri (strain GWSS) (Sulcia muelleri).